The sequence spans 356 residues: Decorin (356 aa).

A signal peptide spans 1-15; that stretch reads MRLVLFILLLPVCLA. A propeptide spanning residues 16–29 is cleaved from the precursor; it reads TPFHQKGLFDFMLE. Serine 45 carries O-linked (Xyl...) (glycosaminoglycan) serine glycosylation. Intrachain disulfides connect cysteine 51–cysteine 57 and cysteine 55–cysteine 64. LRR repeat units lie at residues 70–90, 91–114, 115–138, 139–159, 160–183, 184–209, 210–230, 231–254, 255–278, 279–301, 302–331, and 332–356; these read ERVP…NNKI, TEIR…NNKI, SKIS…KNNL, KELP…ENEI, SKLR…TNPL, KSSG…DTNI, TSIP…GNKI, SKID…FNSI, SSVE…NNEL, VRVP…NNKI, ASIG…SNPV, and QYWE…GNYK. N-linked (GlcNAc...) asparagine glycosylation occurs at asparagine 208. Asparagine 259 carries N-linked (GlcNAc...) asparagine glycosylation. Cysteine 310 and cysteine 343 form a disulfide bridge.

Belongs to the small leucine-rich proteoglycan (SLRP) family. SLRP class I subfamily. As to quaternary structure, binds to type I and type II collagen, to fibronectin and TGF-beta. Forms a ternary complex with MFAP2 and ELN. Post-translationally, the attached glycosaminoglycan chain can be either chondroitin sulfate or dermatan sulfate depending upon the tissue of origin.

Its subcellular location is the secreted. It is found in the extracellular space. The protein localises to the extracellular matrix. In terms of biological role, may affect the rate of fibrils formation. In Coturnix japonica (Japanese quail), this protein is Decorin (DCN).